The sequence spans 303 residues: Formylglycine-generating enzyme (303 aa).

Ca(2+) contacts are provided by N188, I189, D202, Y204, N222, V223, G225, and V227. Cu(+)-binding residues include C269 and C274.

It belongs to the sulfatase-modifying factor family. The cofactor is Cu(+).

It carries out the reaction L-cysteinyl-[sulfatase] + 2 a thiol + O2 = an organic disulfide + 3-oxo-L-alanyl-[sulfatase] + hydrogen sulfide + H2O + H(+). It participates in protein modification; sulfatase oxidation. Its function is as follows. Oxidase that catalyzes the conversion of cysteine to 3-oxoalanine on target proteins. 3-oxoalanine modification, which is also named formylglycine (fGly), occurs in the maturation of arylsulfatases and some alkaline phosphatases that use the hydrated form of 3-oxoalanine as a catalytic nucleophile. This is Formylglycine-generating enzyme from Thermomonospora curvata (strain ATCC 19995 / DSM 43183 / JCM 3096 / KCTC 9072 / NBRC 15933 / NCIMB 10081 / Henssen B9).